The primary structure comprises 491 residues: Ketol-acid reductoisomerase (NADP(+)) (491 aa).

A KARI N-terminal Rossmann domain is found at 15-208 (AQLGKCRFMG…GGHRAGVLES (194 aa)). Residues 45 to 48 (CGAQ), R68, R76, S78, and 108 to 110 (DKQ) contribute to the NADP(+) site. H132 is a catalytic residue. G158 serves as a coordination point for NADP(+). KARI C-terminal knotted domains are found at residues 209 to 344 (SFVA…TAPQ) and 345 to 484 (FEGK…MTDM). The Mg(2+) site is built by D217, E221, E389, and E393. Residue S414 coordinates substrate.

The protein belongs to the ketol-acid reductoisomerase family. Mg(2+) serves as cofactor.

It catalyses the reaction (2R)-2,3-dihydroxy-3-methylbutanoate + NADP(+) = (2S)-2-acetolactate + NADPH + H(+). The enzyme catalyses (2R,3R)-2,3-dihydroxy-3-methylpentanoate + NADP(+) = (S)-2-ethyl-2-hydroxy-3-oxobutanoate + NADPH + H(+). Its pathway is amino-acid biosynthesis; L-isoleucine biosynthesis; L-isoleucine from 2-oxobutanoate: step 2/4. It participates in amino-acid biosynthesis; L-valine biosynthesis; L-valine from pyruvate: step 2/4. Involved in the biosynthesis of branched-chain amino acids (BCAA). Catalyzes an alkyl-migration followed by a ketol-acid reduction of (S)-2-acetolactate (S2AL) to yield (R)-2,3-dihydroxy-isovalerate. In the isomerase reaction, S2AL is rearranged via a Mg-dependent methyl migration to produce 3-hydroxy-3-methyl-2-ketobutyrate (HMKB). In the reductase reaction, this 2-ketoacid undergoes a metal-dependent reduction by NADPH to yield (R)-2,3-dihydroxy-isovalerate. The protein is Ketol-acid reductoisomerase (NADP(+)) of Salmonella heidelberg (strain SL476).